A 236-amino-acid chain; its full sequence is Putative glutamine amidotransferase-like protein YvdE (236 aa).

Residues 17–236 form the Glutamine amidotransferase type-1 domain; it reads SPFWWNKVSY…IFEIFANGTI (220 aa).

The sequence is that of Putative glutamine amidotransferase-like protein YvdE (yvdE) from Lactococcus lactis subsp. lactis (strain IL1403) (Streptococcus lactis).